Here is a 622-residue protein sequence, read N- to C-terminus: Dehydrogenase mpl7 (622 aa).

FAD-binding positions include 23 to 24, 44 to 45, and 102 to 105; these read TA, EA, and NFMS. H554 (proton acceptor) is an active-site residue. FAD-binding positions include A582 and 593–594; that span reads IM.

The protein belongs to the GMC oxidoreductase family. Homodimer. The cofactor is FAD.

It participates in mycotoxin biosynthesis. Functionally, dehydrogenase; part of the gene cluster that mediates the biosynthesis of the mycotoxin citrinin, a hepato-nephrotoxic compound to humans due to inhibition of respiration complex III. The pathway begins with the synthesis of a keto-aldehyde intermediate by the citrinin PKS (pksCT) from successive condensations of 4 malonyl-CoA units, presumably with a simple acetyl-CoA starter unit. Release of the keto-aldehyde intermediate is consistent with the presence of the C-terminal reductive release domain. Mp11 collaborates with pksCT by catalyzing the hydrolysis of ACP-bound acyl intermediates to free the ACP from stalled intermediates. Mpl2 then catalyzes the oxidation of the C-12 methyl of the ketone intermediate to an alcohol intermediate which is further oxidized by the oxidoreductase mpl7 to produce a bisaldehyde intermediate. The fourth catalytic step is catalyzed by the mpl4 aldehyde dehydrogenase. The final transformation is the reduction of C-3 by mpl6 to provide the chemically stable citrinin nucleus. The sequence is that of Dehydrogenase mpl7 from Monascus purpureus (Red mold).